We begin with the raw amino-acid sequence, 922 residues long: Lacticin 481/lactococcin biosynthesis protein LcnDR2 (922 aa).

In terms of biological role, could be implicated in the processing or the export process of the lantibiotic lacticin 481/lactococcin DR. The sequence is that of Lacticin 481/lactococcin biosynthesis protein LcnDR2 (lcnDR2) from Lactococcus lactis subsp. lactis (Streptococcus lactis).